The primary structure comprises 178 residues: Ribosome maturation factor RimM (178 aa).

The region spanning 99-178 (EGDFYWHDLI…TIEVDWDAGF (80 aa)) is the PRC barrel domain.

The protein belongs to the RimM family. Binds ribosomal protein uS19.

The protein localises to the cytoplasm. Functionally, an accessory protein needed during the final step in the assembly of 30S ribosomal subunit, possibly for assembly of the head region. Essential for efficient processing of 16S rRNA. May be needed both before and after RbfA during the maturation of 16S rRNA. It has affinity for free ribosomal 30S subunits but not for 70S ribosomes. The chain is Ribosome maturation factor RimM from Mannheimia succiniciproducens (strain KCTC 0769BP / MBEL55E).